Reading from the N-terminus, the 238-residue chain is Tyrosine recombinase XerD-like (238 aa).

The region spanning 1–75 is the Core-binding (CB) domain; sequence MKLPNEIDEY…SANQYLLFLY (75 aa). In terms of domain architecture, Tyr recombinase spans 90–238; the sequence is VQKKSQTAQS…TITTLEKYYR (149 aa). Catalysis depends on residues K154 and R204. Y236 acts as the O-(3'-phospho-DNA)-tyrosine intermediate in catalysis.

It belongs to the 'phage' integrase family. XerD-like subfamily.

The protein localises to the cytoplasm. Its function is as follows. Putative tyrosine recombinase. Not involved in the cutting and rejoining of the recombining DNA molecules on dif(SL) site. This Lactococcus lactis subsp. lactis (strain IL1403) (Streptococcus lactis) protein is Tyrosine recombinase XerD-like (ynbA).